The primary structure comprises 258 residues: MLAKDFLFMKNIRITIEYDGTGYAGWQRQAGSFCTVQGEIERILSQILQEDIRLAGAGRTDKGVHARAQIATFKSRSSLGPDRMVHSMNALLPNTIRISDPLVVPEGFHARHSAKEREYRYFVREEPSAVLGRFSGCSYGSLDLMSMNRVASYVLGEHDFSVFSKETRDRTGCLCRVISCKWFRQREFFVLRISANRFLRSMVRYLAALMIDSGKGLLSPEEAREMIESGILTRQLVPAAPNGLFLWKITYGSDSHSF.

Aspartate 61 functions as the Nucleophile in the catalytic mechanism. Position 119 (tyrosine 119) interacts with substrate.

The protein belongs to the tRNA pseudouridine synthase TruA family. Homodimer.

It carries out the reaction uridine(38/39/40) in tRNA = pseudouridine(38/39/40) in tRNA. In terms of biological role, formation of pseudouridine at positions 38, 39 and 40 in the anticodon stem and loop of transfer RNAs. The chain is tRNA pseudouridine synthase A from Chlorobium phaeobacteroides (strain DSM 266 / SMG 266 / 2430).